An 83-amino-acid polypeptide reads, in one-letter code: U5-theraphotoxin-Hs1b 1 (83 aa).

The signal sequence occupies residues 1-21 (MKTSMFLTLTGLVLLFVVCYA). A propeptide spanning residues 22-49 (SESEEKEFPKELLSSIFAADSDFKEEER) is cleaved from the precursor. Intrachain disulfides connect cysteine 51/cysteine 63, cysteine 56/cysteine 68, and cysteine 62/cysteine 75.

The protein belongs to the neurotoxin 10 (Hwtx-1) family. 51 (Hntx-8) subfamily. Hntx-8 sub-subfamily. Expressed by the venom gland.

Its subcellular location is the secreted. Functionally, weakly inhibits 5HT3A receptors and Kv1.3/KCNA3 voltage-gated potassium channels. Agglutinates erythrocytes. This Cyriopagopus schmidti (Chinese bird spider) protein is U5-theraphotoxin-Hs1b 1.